Here is a 398-residue protein sequence, read N- to C-terminus: Ornithine aminotransferase (398 aa).

Residue Lys256 is modified to N6-(pyridoxal phosphate)lysine.

Belongs to the class-III pyridoxal-phosphate-dependent aminotransferase family. OAT subfamily. Pyridoxal 5'-phosphate serves as cofactor.

It is found in the cytoplasm. The enzyme catalyses a 2-oxocarboxylate + L-ornithine = L-glutamate 5-semialdehyde + an L-alpha-amino acid. It participates in amino-acid biosynthesis; L-proline biosynthesis; L-glutamate 5-semialdehyde from L-ornithine: step 1/1. In terms of biological role, catalyzes the interconversion of ornithine to glutamate semialdehyde. The chain is Ornithine aminotransferase from Oceanobacillus iheyensis (strain DSM 14371 / CIP 107618 / JCM 11309 / KCTC 3954 / HTE831).